A 784-amino-acid polypeptide reads, in one-letter code: MSDLDSSSSSAYPKYLEHLSGDGKAIGVLTSGGDAQGMNAAVRAVVRMGIYTGAKVYFIYEGYQGLVDGGSNIVEAKWDCVSSILQVGGTIIGSARCKAFRSREGRLKAACNLARLGITNLCVIGGDGSLTGANLFRKEWSGLLEELARNGDIDNDTVQKYSYLNVVGMVGSIDNDFCGTDMTIGTDSALHRIIEVVDAIMTTAQSHQRTFVLEVMGRHCGYLALVSALTCGADWVFLPESPPEEDWEENMCLKLSENRARKKRLNIIIVSEGAIDMQNKPITSEKIKELVVKNLGFDTRVTILGHVQRGGTPSAFDRILASRMGVEAVIALLEATPETPACVVSLRGNQAVRLPLMECVQMTQDVQKAMDERRFKEAVKLRGRRFEGNLNTYKRLAIKLPDEKIVKSNCNVAVINVGAPAAGMNAAVRSAVRVGIADGHKMFAIYDGFEGFANGQIKEIGWADVGGWTGQGGSILGTKRTLPGKYLEKIAEQMHSHSINALLIIGGFEAYLGLLELAAAREKHEAFCVPMVMVPATVSNNVPGSDFSIGADTALNTITDTCDRIKQSASGTKRRVFIIETMGGYCGYLANMGALAAGADAAYIFEEPFDIGDLQSNVVHLTEKMKTSIQRGLVLRNESCSVNYTTDFIYQLYSEEGKGVFDCRKNVLGHMQQGGAPSPFDRNFGTKISAKAMEWISAKLKGSQGTGKKFVSDDSICVLGICKRDLLFQPVAELKKVTDFEHRIPKEQWWLKLRPIMKILAKYEASYDMSDSGKLESLQHHEEL.

M1 is subject to N-acetylmethionine. Residues 1-398 (MSDLDSSSSS…NLNTYKRLAI (398 aa)) are N-terminal catalytic PFK domain 1. S2, S6, and S20 each carry phosphoserine. Residues G33, 96 to 97 (RC), and 126 to 129 (GDGS) each bind ATP. D127 contributes to the Mg(2+) binding site. S141 is subject to Phosphoserine. Substrate contacts are provided by residues 172 to 174 (SID), R209, 216 to 218 (MGR), E272, R300, and 306 to 309 (HVQR). The active-site Proton acceptor is the D174. N6-acetyllysine is present on K394. Residues 399-410 (KLPDEKIVKSNC) form an interdomain linker region. Residues 411 to 784 (NVAVINVGAP…LESLQHHEEL (374 aa)) are C-terminal regulatory PFK domain 2. R480 provides a ligand contact to beta-D-fructose 2,6-bisphosphate. An N6-acetyllysine modification is found at K485. Residues 537–541 (TVSNN), R575, 582–584 (MGG), and E638 each bind beta-D-fructose 2,6-bisphosphate. Residue S539 is glycosylated (O-linked (GlcNAc) serine). Y650 carries the phosphotyrosine modification. Residues R664 and 670–673 (HMQQ) each bind beta-D-fructose 2,6-bisphosphate. The residue at position 687 (K687) is an N6-acetyllysine. R743 is a binding site for beta-D-fructose 2,6-bisphosphate.

The protein belongs to the phosphofructokinase type A (PFKA) family. ATP-dependent PFK group I subfamily. Eukaryotic two domain clade 'E' sub-subfamily. Homo- and heterotetramers. Phosphofructokinase (PFK) enzyme functions as a tetramer composed of different combinations of 3 types of subunits, called PFKM (M), PFKL (L) and PFKP (P). The composition of the PFK tetramer differs according to the tissue type it is present in. The kinetic and regulatory properties of the tetrameric enzyme are dependent on the subunit composition, hence can vary across tissues. Interacts with ATG4B; promoting phosphorylation of ATG4B. The cofactor is Mg(2+). In terms of processing, glcNAcylation decreases enzyme activity. As to expression, expression is constant during tumor growth and markedly decreases when cell proliferation stops.

The protein resides in the cytoplasm. It carries out the reaction beta-D-fructose 6-phosphate + ATP = beta-D-fructose 1,6-bisphosphate + ADP + H(+). The protein operates within carbohydrate degradation; glycolysis; D-glyceraldehyde 3-phosphate and glycerone phosphate from D-glucose: step 3/4. With respect to regulation, allosterically activated by ADP, AMP, or fructose 2,6-bisphosphate, and allosterically inhibited by ATP or citrate. In terms of biological role, catalyzes the phosphorylation of D-fructose 6-phosphate to fructose 1,6-bisphosphate by ATP, the first committing step of glycolysis. The chain is ATP-dependent 6-phosphofructokinase, platelet type (Pfkp) from Mus musculus (Mouse).